A 209-amino-acid polypeptide reads, in one-letter code: LexA repressor (209 aa).

A DNA-binding region (H-T-H motif) is located at residues 32–52 (VREIGKAVDLSSTSTVHGHLA). Catalysis depends on for autocatalytic cleavage activity residues S131 and K169.

Belongs to the peptidase S24 family. In terms of assembly, homodimer.

The enzyme catalyses Hydrolysis of Ala-|-Gly bond in repressor LexA.. Its function is as follows. Represses a number of genes involved in the response to DNA damage (SOS response), including recA and lexA. In the presence of single-stranded DNA, RecA interacts with LexA causing an autocatalytic cleavage which disrupts the DNA-binding part of LexA, leading to derepression of the SOS regulon and eventually DNA repair. The sequence is that of LexA repressor from Enterococcus faecalis (strain ATCC 700802 / V583).